A 419-amino-acid polypeptide reads, in one-letter code: Hydrolase LUC6 (419 aa).

Residue serine 238 is part of the active site.

Belongs to the AB hydrolase superfamily. FUS2 hydrolase family.

It functions in the pathway mycotoxin biosynthesis. In terms of biological role, hydrolase; part of the gene cluster that mediates the biosynthesis of the mycotoxin lucilactaene and the lucilactaene-related compound NG-391 that act as cell cycle inhibitors with potent growth inhibitory activity against malarial parasites, moderate growth inhibitory activity against cancer cells, and no activity against bacteria and fungi. Within the pathway, LUC6 may catalyze the 2-pyrrolidone ring formation to form prelucilactaene C from prelucilactaene B, followed by C-15 hydroxylation by the same enzyme to give prelucilactaene D, epoxydation to yield prelucilactaene E, and finally cyclization to yield prelucilactaene F. The pathway begins with the hybrid PKS-NRPS synthetase LUC5 which is responsible for the condensation of one acetyl-coenzyme A (CoA) unit with six malonyl-CoA units and the amide linkage of the arising heptaketide and homoserine, subsequently releasing the first intermediate prelucilactaene B. Both the cytochrome P450 monooxygenase LUC2 and the hydrolase LUC6 function in parallel in modification of prelucilactaene B. LUC6 may catalyze the 2-pyrrolidone ring formation to form prelucilactaene C from prelucilactaene B, followed by C-15 hydroxylation by the same enzyme to give prelucilactaene D, which is then converted to prelucilactaene E by epoxidation, and finally to prelucilactaene F by cyclization. Prelucilactane D, prelucilactaene E, and prelucilactaene F can be converted to dihydrolucilactaene, NG391, and lucilactaene, respectively, via C-20 methyl group hydroxylation by the cytochrome P450 monooxygenase LUC2. However, LUC2, unlike FUS8 in fusarin C biosynthesis, is not enough for the full oxidation of the C-20 methyl group into carboxylic acid, which is a prerequisite for the final methylation step. The aldehyde dehydrogenase LUC3 is involved in the biosynthesis by further oxidation of the C-20 alcoholic analog prelucilactaene G into a carboxylic derivative. This unidentified carboxylic derivative may be converted to demethyllucilactaene. As the last step, the methyltransferase LUC1 methylates the hydroxyl group at C-21 of demethyllucilactaene to generate lucilactaene. The polypeptide is Hydrolase LUC6 (Fusarium sp).